The sequence spans 454 residues: Chromosomal replication initiator protein DnaA (454 aa).

The interval 1-81 is domain I, interacts with DnaA modulators; it reads MNNSLWQQCA…PNVVLKVGEA (81 aa). The tract at residues 79-110 is disordered; that stretch reads GEASPTQRDSGSPQRAAATRRKTPNFSSGNTD. The interval 81-117 is domain II; sequence ASPTQRDSGSPQRAAATRRKTPNFSSGNTDVEVPFES. A compositionally biased stretch (polar residues) spans 82 to 91; it reads SPTQRDSGSP. The domain III, AAA+ region stretch occupies residues 118 to 334; sequence NIHPEYTFDN…GALNRVVANV (217 aa). Gly162, Gly164, Lys165, and Thr166 together coordinate ATP. The domain IV, binds dsDNA stretch occupies residues 335–454; sequence QLTGRPITID…YRNLIRTLSS (120 aa).

It belongs to the DnaA family. In terms of assembly, oligomerizes as a right-handed, spiral filament on DNA at oriC.

The protein localises to the cytoplasm. Its function is as follows. Plays an essential role in the initiation and regulation of chromosomal replication. ATP-DnaA binds to the origin of replication (oriC) to initiate formation of the DNA replication initiation complex once per cell cycle. Binds the DnaA box (a 9 base pair repeat at the origin) and separates the double-stranded (ds)DNA. Forms a right-handed helical filament on oriC DNA; dsDNA binds to the exterior of the filament while single-stranded (ss)DNA is stabiized in the filament's interior. The ATP-DnaA-oriC complex binds and stabilizes one strand of the AT-rich DNA unwinding element (DUE), permitting loading of DNA polymerase. After initiation quickly degrades to an ADP-DnaA complex that is not apt for DNA replication. Binds acidic phospholipids. This chain is Chromosomal replication initiator protein DnaA, found in Idiomarina loihiensis (strain ATCC BAA-735 / DSM 15497 / L2-TR).